Reading from the N-terminus, the 431-residue chain is Histidinol dehydrogenase (431 aa).

Residues Tyr124, Gln187, and Asn210 each coordinate NAD(+). The substrate site is built by Ser236, Gln258, and His261. Zn(2+) contacts are provided by Gln258 and His261. Catalysis depends on proton acceptor residues Glu325 and His326. Residues His326, Asp359, Glu413, and His418 each contribute to the substrate site. Asp359 serves as a coordination point for Zn(2+). His418 serves as a coordination point for Zn(2+).

Belongs to the histidinol dehydrogenase family. Requires Zn(2+) as cofactor.

It catalyses the reaction L-histidinol + 2 NAD(+) + H2O = L-histidine + 2 NADH + 3 H(+). Its pathway is amino-acid biosynthesis; L-histidine biosynthesis; L-histidine from 5-phospho-alpha-D-ribose 1-diphosphate: step 9/9. Its function is as follows. Catalyzes the sequential NAD-dependent oxidations of L-histidinol to L-histidinaldehyde and then to L-histidine. The polypeptide is Histidinol dehydrogenase (Legionella pneumophila (strain Lens)).